The primary structure comprises 310 residues: Olfactory receptor 10G2 (310 aa).

Residues 1 to 29 (MGKTKNTSLDAVVTDFILLGLSHPPNLRS) lie on the Extracellular side of the membrane. The N-linked (GlcNAc...) asparagine glycan is linked to Asn6. The helical transmembrane segment at 30–50 (LLFLVFFIIYILTQLGNLLIL) threads the bilayer. The Cytoplasmic segment spans residues 51-58 (LTMWADPK). Residues 59–80 (LCARPMYILLGVLSFLDMWLSS) form a helical membrane-spanning segment. Topologically, residues 81 to 104 (VTVPLLILDFTPSIKAIPFGGCVA) are extracellular. An intrachain disulfide couples Cys102 to Cys194. The helical transmembrane segment at 105 to 125 (QLYFFHFLGSTQCFLYTLMAY) threads the bilayer. The Cytoplasmic segment spans residues 126–144 (DRYLAICQPLRYPVLMNGR). The helical transmembrane segment at 145–165 (LCTVLVAGAWVAGSMHGSIQA) threads the bilayer. Topologically, residues 166 to 202 (TLTFRLPYCGPNQVDYFICDIPAVLRLACADTTVNEL) are extracellular. Residues 203-222 (VTFVDVGVVAASCFMLILLS) form a helical membrane-spanning segment. Topologically, residues 223 to 242 (YANIVNAILKIRTTDGRRRA) are cytoplasmic. A helical transmembrane segment spans residues 243–263 (FSTCGSHLIVVTVYYVPCIFI). Topologically, residues 264–274 (YLRAGSKDPLD) are extracellular. Residues 275-295 (GAAAVFYTVVTPLLNPLIYTL) form a helical membrane-spanning segment. The Cytoplasmic portion of the chain corresponds to 296–310 (RNQEVKSALKRITAG).

This sequence belongs to the G-protein coupled receptor 1 family.

The protein resides in the cell membrane. In terms of biological role, odorant receptor. This chain is Olfactory receptor 10G2 (OR10G2), found in Homo sapiens (Human).